The sequence spans 97 residues: Large ribosomal subunit protein uL23 (97 aa).

Belongs to the universal ribosomal protein uL23 family. As to quaternary structure, part of the 50S ribosomal subunit. Contacts protein L29, and trigger factor when it is bound to the ribosome.

Its function is as follows. One of the early assembly proteins it binds 23S rRNA. One of the proteins that surrounds the polypeptide exit tunnel on the outside of the ribosome. Forms the main docking site for trigger factor binding to the ribosome. The sequence is that of Large ribosomal subunit protein uL23 from Allorhizobium ampelinum (strain ATCC BAA-846 / DSM 112012 / S4) (Agrobacterium vitis (strain S4)).